The chain runs to 173 residues: C-phycocyanin beta subunit (173 aa).

Asparagine 73 bears the N4-methylasparagine mark. (2R,3E)-phycocyanobilin-binding residues include cysteine 83 and cysteine 154.

Belongs to the phycobiliprotein family. Heterodimer of an alpha and a beta subunit, which further assembles into trimers and the trimers into hexamers. Contains two covalently linked bilin chromophores.

It is found in the cellular thylakoid membrane. Functionally, light-harvesting photosynthetic bile pigment-protein from the phycobiliprotein complex (phycobilisome, PBS). Phycocyanin is the major phycobiliprotein in the PBS rod. The sequence is that of C-phycocyanin beta subunit (cpcB1) from Synechococcus elongatus (strain ATCC 33912 / PCC 7942 / FACHB-805) (Anacystis nidulans R2).